A 473-amino-acid chain; its full sequence is 3-isopropylmalate dehydratase large subunit (473 aa).

Residues cysteine 351, cysteine 414, and cysteine 417 each contribute to the [4Fe-4S] cluster site.

Belongs to the aconitase/IPM isomerase family. LeuC type 1 subfamily. In terms of assembly, heterodimer of LeuC and LeuD. The cofactor is [4Fe-4S] cluster.

It catalyses the reaction (2R,3S)-3-isopropylmalate = (2S)-2-isopropylmalate. It participates in amino-acid biosynthesis; L-leucine biosynthesis; L-leucine from 3-methyl-2-oxobutanoate: step 2/4. In terms of biological role, catalyzes the isomerization between 2-isopropylmalate and 3-isopropylmalate, via the formation of 2-isopropylmaleate. The protein is 3-isopropylmalate dehydratase large subunit of Variovorax paradoxus (strain S110).